Consider the following 363-residue polypeptide: Serpentine receptor class beta-17 (363 aa).

Helical transmembrane passes span 46 to 66 (AFLLVKLYHILLSVISMGSII), 75 to 95 (LLAFHFNIKILFFFQFCSCFL), 120 to 140 (VILAPALFALFNLPLIFSMLC), 169 to 189 (IGFVLTSFAVIVPGLTCLYMY), 214 to 234 (YIFITINVLNVLTLMHSIGLY), 273 to 293 (CAQLIIFLLYGCAMYSLRIFL), and 304 to 324 (VTEFCYTPPLYCAIMPLICIV).

It belongs to the nematode receptor-like protein srb family.

Its subcellular location is the membrane. The protein is Serpentine receptor class beta-17 (srb-17) of Caenorhabditis elegans.